Here is a 60-residue protein sequence, read N- to C-terminus: Large ribosomal subunit protein bL32 (60 aa).

Residues 1–16 show a composition bias toward basic residues; the sequence is MAVPRRKTSPSRRGMR. Residues 1–60 are disordered; the sequence is MAVPRRKTSPSRRGMRRSADAIKKPTYAEDKDSGELRRPHHLDLKTGMYKGRQVLIKKES. The segment covering 17–44 has biased composition (basic and acidic residues); it reads RSADAIKKPTYAEDKDSGELRRPHHLDL.

The protein belongs to the bacterial ribosomal protein bL32 family.

This is Large ribosomal subunit protein bL32 from Rhodopseudomonas palustris (strain BisA53).